The chain runs to 356 residues: Tyrosine recombinase XerS (356 aa).

One can recognise a Core-binding (CB) domain in the interval 16–121 (LMPWFVLEYY…ALSCLYKYLT (106 aa)). Positions 169–354 (KFLDYVENEY…VNDEQKNALD (186 aa)) constitute a Tyr recombinase domain. Catalysis depends on residues arginine 210, lysine 234, histidine 306, arginine 309, and histidine 332. The active-site O-(3'-phospho-DNA)-tyrosine intermediate is tyrosine 341.

The protein belongs to the 'phage' integrase family. XerS subfamily.

It localises to the cytoplasm. Its activity is regulated as follows. FtsK is required for recombination. Its function is as follows. Site-specific tyrosine recombinase, which acts by catalyzing the cutting and rejoining of the recombining DNA molecules. Essential to convert dimers of the bacterial chromosome into monomers to permit their segregation at cell division. This chain is Tyrosine recombinase XerS, found in Streptococcus thermophilus (strain ATCC BAA-250 / LMG 18311).